An 86-amino-acid chain; its full sequence is Putative membrane protein insertion efficiency factor (86 aa).

A disordered region spans residues 67 to 86 (LHEGGDDPVPPVKNNDNREH).

This sequence belongs to the UPF0161 family.

It localises to the cell inner membrane. In terms of biological role, could be involved in insertion of integral membrane proteins into the membrane. This chain is Putative membrane protein insertion efficiency factor, found in Photorhabdus laumondii subsp. laumondii (strain DSM 15139 / CIP 105565 / TT01) (Photorhabdus luminescens subsp. laumondii).